The following is a 328-amino-acid chain: Neuropeptides B/W receptor type 1 (328 aa).

Topologically, residues 1-37 (MDNASFSEPWPANASGPDPALSCSNASTLAPLPAPLA) are extracellular. Residues Asn3, Asn13, and Asn25 are each glycosylated (N-linked (GlcNAc...) asparagine). Residues 38-61 (VAVPVVYAVICAVGLAGNSAVLYV) form a helical membrane-spanning segment. Residues 62–72 (LLRAPRMKTVT) lie on the Cytoplasmic side of the membrane. The helical transmembrane segment at 73 to 97 (NLFILNLAIADELFTLVLPINIADF) threads the bilayer. Topologically, residues 98–112 (LLRQWPFGELMCKLI) are extracellular. Cys109 and Cys188 are oxidised to a cystine. A helical membrane pass occupies residues 113–132 (VAIDQYNTFSSLYFLTVMSA). Over 133–157 (DRYLVVLATAESRRVAGRTYSAARA) the chain is Cytoplasmic. A helical membrane pass occupies residues 158 to 177 (VSLAVWGIVTLVVLPFAVFA). Over 178-202 (RLDDEQGRRQCVLVFPQPEAFWWRA) the chain is Extracellular. The chain crosses the membrane as a helical span at residues 203–224 (SRLYTLVLGFAIPVSTICVLYT). The Cytoplasmic portion of the chain corresponds to 225 to 248 (TLLCRLHAMRLDSHAKALERAKKR). A helical transmembrane segment spans residues 249-273 (VTFLVVAILAVCLLCWTPYHLSTVV). The Extracellular portion of the chain corresponds to 274–283 (ALTTDLPQTP). Residues 284-298 (LVIAISYFITSLSYA) form a helical membrane-spanning segment. The Cytoplasmic segment spans residues 299–328 (NSCLNPFLYAFLDASFRRNLRQLITCRAAA).

This sequence belongs to the G-protein coupled receptor 1 family. Found in cerebellum and frontal cortex. Detected at high levels in hippocampus, amygdala and trachea; at moderate levels in fetal brain, pituitary gland and prostate. Not in caudate, accumbens, kidney or liver. Also detected at high levels in lung carcinoma.

It localises to the cell membrane. Its function is as follows. Interacts specifically with a number of opioid ligands. Receptor for neuropeptides B and W, which may be involved in neuroendocrine system regulation, food intake and the organization of other signals. Has a higher affinity for neuropeptide B. This Homo sapiens (Human) protein is Neuropeptides B/W receptor type 1 (NPBWR1).